Consider the following 316-residue polypeptide: N-acetyl-gamma-glutamyl-phosphate reductase (316 aa).

Cys-136 is an active-site residue.

It belongs to the NAGSA dehydrogenase family. Type 1 subfamily.

It is found in the cytoplasm. The enzyme catalyses N-acetyl-L-glutamate 5-semialdehyde + phosphate + NADP(+) = N-acetyl-L-glutamyl 5-phosphate + NADPH + H(+). It functions in the pathway amino-acid biosynthesis; L-arginine biosynthesis; N(2)-acetyl-L-ornithine from L-glutamate: step 3/4. Catalyzes the NADPH-dependent reduction of N-acetyl-5-glutamyl phosphate to yield N-acetyl-L-glutamate 5-semialdehyde. The sequence is that of N-acetyl-gamma-glutamyl-phosphate reductase from Xanthomonas oryzae pv. oryzae (strain MAFF 311018).